The chain runs to 288 residues: Damage-control phosphatase AF_1104 (288 aa).

The Subfamily I CxxC motif signature appears at 7–10 (CPSC). Mn(2+) is bound by residues Asp160, Asn161, and Asp194. Residues 247 to 250 (ANYE) carry the Subfamily I GNFE-like motif motif. The Subfamily I KC motif motif lies at 267 to 268 (KC).

The protein belongs to the damage-control phosphatase family. Nucleotides phosphatase I subfamily. Requires [2Fe-2S] cluster as cofactor. Mn(2+) serves as cofactor. Ni(2+) is required as a cofactor.

In terms of biological role, metal-dependent phosphatase with probable damage-control functions. Could hydrolyze oxidatively damaged purine nucleotides or their biosynthetic intermediates. This is Damage-control phosphatase AF_1104 from Archaeoglobus fulgidus (strain ATCC 49558 / DSM 4304 / JCM 9628 / NBRC 100126 / VC-16).